A 587-amino-acid chain; its full sequence is Probable phosphoribomutase (587 aa).

Substrate-binding positions include Thr49, Arg53, and 149-150; that span reads SH. Ser149 acts as the Phosphoserine intermediate in catalysis. Residues Ser149, Asp306, Asp308, and Asp310 each coordinate Mg(2+). Ser149 bears the Phosphoserine mark. Substrate contacts are provided by residues 310 to 311, Thr380, 404 to 406, and Lys418; these read DR and EEA.

This sequence belongs to the phosphohexose mutase family. Mg(2+) serves as cofactor.

It localises to the cytoplasm. The protein resides in the nucleus. The enzyme catalyses alpha-D-ribose 1-phosphate = D-ribose 5-phosphate. In terms of biological role, converts ribose 1-phosphate to ribose 5-phosphate. Involved in ribose salvage via the pentose phosphate pathway. The polypeptide is Probable phosphoribomutase (Schizosaccharomyces pombe (strain 972 / ATCC 24843) (Fission yeast)).